The sequence spans 891 residues: Dynein axonemal intermediate chain 3 (891 aa).

A compositionally biased stretch (basic residues) spans 1–16 (MAPKQKKKSSRRKKSP). Residues 1 to 27 (MAPKQKKKSSRRKKSPKPILAASEDME) are disordered. WD repeat units follow at residues 395–435 (ESPD…DRIE), 477–533 (GHKR…PLTP), 670–709 (IHDG…GPLL), and 713–753 (CAPK…HEPA). Residues 817-861 (HLEYVEQRKKIREQEKKEMEQEMAKKKVKIYQKSKEQMEAELKMD) adopt a coiled-coil conformation.

Interacts with ACTR2; this interaction reduces binding of the Arp2/3 complex to the VCA domain of nucleation promoting factors. Part of the multisubunit axonemal dynein complex formed at least of two heavy chains and a number of intermediate and light chains. Found in a associated with the catalytic heavy chain DNAH2, the intermediate chain DNAI4, and the light chain DYNLT1.

It is found in the cytoplasm. Its function is as follows. Acts as a negative regulator of cell migration, invasion, and metastasis downstream of p53/TP53, through inhibition of Arp2/3 complex-mediated actin polymerization. Via its association with the multisubunit axonemal dynein complex, is potentially involved in the regulation of cilia function. May play a role in osteogenesis of dental tissue-derived mesenchymal stem cells. In Macaca fascicularis (Crab-eating macaque), this protein is Dynein axonemal intermediate chain 3 (DNAI3).